The primary structure comprises 197 residues: Probable GTP-binding protein EngB (197 aa).

One can recognise an EngB-type G domain in the interval 22-197 (TGVEVAFAGR…FKEKLDTWYQ (176 aa)). GTP-binding positions include 30-37 (GRSNAGKS), 57-61 (GRTQL), 75-78 (DLPG), 142-145 (TKAD), and 177-179 (FSS). Residues serine 37 and threonine 59 each coordinate Mg(2+).

It belongs to the TRAFAC class TrmE-Era-EngA-EngB-Septin-like GTPase superfamily. EngB GTPase family. Mg(2+) is required as a cofactor.

Its function is as follows. Necessary for normal cell division and for the maintenance of normal septation. The sequence is that of Probable GTP-binding protein EngB from Francisella tularensis subsp. holarctica (strain FTNF002-00 / FTA).